Here is a 309-residue protein sequence, read N- to C-terminus: Syndecan-1 (309 aa).

Residues 1–22 form the signal peptide; the sequence is MRRAALWLWLCALALRLQPVLP. Topologically, residues 24-253 are extracellular; the sequence is IMAVNVPPED…GLLDRKEVLG (230 aa). Disordered regions lie at residues 28-57 and 142-185; these read NVPP…DITL and ARAT…GGTS. Acidic residues predominate over residues 32–42; the sequence is EDQDGSGDDSD. Ser37 carries an O-linked (Xyl...) (chondroitin sulfate) serine glycan. Asn43 carries an N-linked (GlcNAc...) asparagine glycan. Ser45 and Ser47 each carry an O-linked (Xyl...) (heparan sulfate) serine glycan. Residues 142 to 151 show a composition bias toward polar residues; it reads ARATTAQAPV. O-linked (Xyl...) (chondroitin sulfate) serine glycans are attached at residues Ser205 and Ser215. The helical transmembrane segment at 254–274 threads the bilayer; that stretch reads GVIAGGLVGLIFAVCLVGFML. The Cytoplasmic portion of the chain corresponds to 275 to 309; the sequence is YRMKKKDEGSYSLEEPKQANGGAYQKPTKQEEFYA. A disordered region spans residues 283 to 309; the sequence is GSYSLEEPKQANGGAYQKPTKQEEFYA. Ser284 carries the post-translational modification Phosphoserine.

It belongs to the syndecan proteoglycan family. As to quaternary structure, interacts with CDCP1. Interacts (via C-terminus) with TIAM1 (via PDZ domain). Interacts with MDK. In terms of processing, shedding is enhanced by a number of factors such as heparanase, thrombin or EGF. Also by stress and wound healing. PMA-mediated shedding is inhibited by TIMP3.

It localises to the membrane. The protein localises to the secreted. It is found in the extracellular exosome. In terms of biological role, cell surface proteoglycan that contains both heparan sulfate and chondroitin sulfate and that links the cytoskeleton to the interstitial matrix. Regulates exosome biogenesis in concert with SDCBP and PDCD6IP. Able to induce its own expression in dental mesenchymal cells and also in the neighboring dental epithelial cells via an MSX1-mediated pathway. This is Syndecan-1 from Cricetulus griseus (Chinese hamster).